The primary structure comprises 494 residues: E3 ubiquitin-protein ligase ari-1.1 (494 aa).

Acidic residues predominate over residues 1–30 (MSSDDEINMDDSDSSQGEIDDGCMSDDDGI). Positions 1 to 52 (MSSDDEINMDDSDSSQGEIDDGCMSDDDGIVLESREQNSSDYKDNGEPDNEV) are disordered. Positions 33–52 (ESREQNSSDYKDNGEPDNEV) are enriched in basic and acidic residues. Positions 124–331 (GDAECDICCS…SSWYSCNRFD (208 aa)) are TRIAD supradomain. Cysteine 128, cysteine 131, cysteine 142, histidine 144, cysteine 147, cysteine 150, cysteine 169, cysteine 174, cysteine 214, cysteine 219, cysteine 235, cysteine 237, cysteine 242, cysteine 245, histidine 250, cysteine 255, cysteine 282, and cysteine 285 together coordinate Zn(2+). Residues 128–174 (CDICCSLGELSGLSCNHRACTQCWKAYLTNKIANNAQSEIECMAPNC) form an RING-type 1 zinc finger. The IBR-type zinc-finger motif lies at 194 to 255 (ATYRKLIVAS…GHDWHEPVNC (62 aa)). The segment at 282–313 (CPKCMITIEKDGGCNHMTCKNTACRFEFCWMC) adopts an RING-type 2; atypical zinc-finger fold. Cysteine 295 is a catalytic residue. The Zn(2+) site is built by cysteine 300, cysteine 305, cysteine 310, cysteine 313, histidine 320, and cysteine 327. An ariadne domain region spans residues 346 to 494 (RANLQRYLFY…ADQELWVFNE (149 aa)).

It belongs to the RBR family. Ariadne subfamily. In terms of assembly, interacts with ubiquitin-conjugating enzyme E2 ubc-18.

It is found in the nucleus. The protein localises to the cytoplasm. It carries out the reaction [E2 ubiquitin-conjugating enzyme]-S-ubiquitinyl-L-cysteine + [acceptor protein]-L-lysine = [E2 ubiquitin-conjugating enzyme]-L-cysteine + [acceptor protein]-N(6)-ubiquitinyl-L-lysine.. Its activity is regulated as follows. Autoinhibited by the ariadne domain, which masks the second RING-type zinc finger that contains the active site and inhibits the E3 activity. In terms of biological role, E3 ubiquitin-protein transferase, which catalyzes ubiquitination of target proteins together with ubiquitin-conjugating enzyme E2 ubc-18. Acts with ubc-18 to regulate pharyngeal development. The chain is E3 ubiquitin-protein ligase ari-1.1 from Caenorhabditis elegans.